The primary structure comprises 192 residues: Peptidyl-tRNA hydrolase (192 aa).

Tyr16 serves as a coordination point for tRNA. Residue His21 is the Proton acceptor of the active site. The tRNA site is built by Tyr66 and Asn68.

This sequence belongs to the PTH family. As to quaternary structure, monomer.

It is found in the cytoplasm. It catalyses the reaction an N-acyl-L-alpha-aminoacyl-tRNA + H2O = an N-acyl-L-amino acid + a tRNA + H(+). Functionally, hydrolyzes ribosome-free peptidyl-tRNAs (with 1 or more amino acids incorporated), which drop off the ribosome during protein synthesis, or as a result of ribosome stalling. Catalyzes the release of premature peptidyl moieties from peptidyl-tRNA molecules trapped in stalled 50S ribosomal subunits, and thus maintains levels of free tRNAs and 50S ribosomes. This Aquifex aeolicus (strain VF5) protein is Peptidyl-tRNA hydrolase.